A 322-amino-acid polypeptide reads, in one-letter code: Acetyl-coenzyme A carboxylase carboxyl transferase subunit alpha (322 aa).

The CoA carboxyltransferase C-terminal domain maps to 43–297; sequence ALKSKSNALT…KEVLTQQLNK (255 aa).

It belongs to the AccA family. Acetyl-CoA carboxylase is a heterohexamer composed of biotin carboxyl carrier protein (AccB), biotin carboxylase (AccC) and two subunits each of ACCase subunit alpha (AccA) and ACCase subunit beta (AccD).

The protein resides in the cytoplasm. It catalyses the reaction N(6)-carboxybiotinyl-L-lysyl-[protein] + acetyl-CoA = N(6)-biotinyl-L-lysyl-[protein] + malonyl-CoA. The protein operates within lipid metabolism; malonyl-CoA biosynthesis; malonyl-CoA from acetyl-CoA: step 1/1. Component of the acetyl coenzyme A carboxylase (ACC) complex. First, biotin carboxylase catalyzes the carboxylation of biotin on its carrier protein (BCCP) and then the CO(2) group is transferred by the carboxyltransferase to acetyl-CoA to form malonyl-CoA. The chain is Acetyl-coenzyme A carboxylase carboxyl transferase subunit alpha from Vesicomyosocius okutanii subsp. Calyptogena okutanii (strain HA).